A 164-amino-acid chain; its full sequence is Protein eva-1 homolog B (164 aa).

Residues 29-49 form a helical membrane-spanning segment; the sequence is GLYFVLGVCFGLLLTLCLLVI. A disordered region spans residues 56–110; sequence RSRPRTPAPRRDPRSSTLEPEDEDDEEDEDTMTRLGPDDTLQGQELSTEPDGPLS. Acidic residues predominate over residues 74–85; sequence EPEDEDDEEDED. Phosphothreonine occurs at positions 86, 149, and 157.

The protein belongs to the EVA1 family.

The protein resides in the membrane. In Mus musculus (Mouse), this protein is Protein eva-1 homolog B (Eva1b).